The primary structure comprises 398 residues: Serpin-Z1A (398 aa).

The interval 343–367 (GTEAAASTAIKMVLQQARPPSVMDF) is RCL.

This sequence belongs to the serpin family.

Its function is as follows. Inhibits chymotrypsin and cathepsin G in vitro. The polypeptide is Serpin-Z1A (WZCI) (Triticum aestivum (Wheat)).